Consider the following 88-residue polypeptide: Small ribosomal subunit protein uS17 (88 aa).

This sequence belongs to the universal ribosomal protein uS17 family. As to quaternary structure, part of the 30S ribosomal subunit.

Functionally, one of the primary rRNA binding proteins, it binds specifically to the 5'-end of 16S ribosomal RNA. This chain is Small ribosomal subunit protein uS17, found in Hahella chejuensis (strain KCTC 2396).